Consider the following 310-residue polypeptide: Solute carrier family 25 member 47 (310 aa).

Solcar repeat units lie at residues 1–80 (MDFV…CLAH), 93–208 (PTKA…LSEW), and 217–304 (PDVL…VLRL). Helical transmembrane passes span 3–23 (FVAG…LDTV), 49–69 (LWGF…VSSV), 98–116 (ITLS…TSPT), 192–212 (GHSF…LTPA), 219–239 (VLGV…VATP), and 275–295 (VLFK…MVVF).

It belongs to the mitochondrial carrier (TC 2.A.29) family.

The protein resides in the mitochondrion inner membrane. The protein localises to the mitochondrion outer membrane. It catalyses the reaction NAD(+)(in) = NAD(+)(out). The catalysed reaction is acetyl-CoA(in) = acetyl-CoA(out). In terms of biological role, mitochondrial NAD(+) transporter that acts as a 'metabolic gate' in hepatic lipogenesis. Provides NAD(+) substrate to mitochondrial SIRT3 deacetylase and enables its NAD(+)-dependent activities in mitochondrial energy metabolism. This triggers downstream activation of PRKAA1/AMPK-alpha signaling cascade that negatively regulates sterol regulatory element-binding protein (SREBP) transcriptional activities and ATP-consuming lipogenesis to restore cellular energy balance. May transport other mitochondrial metabolites having an aromatic nucleotide and phosphate groups, such as acetyl-CoA. Does not transport amino acids. The transport mechanism remains to be elucidated. The polypeptide is Solute carrier family 25 member 47 (Rattus norvegicus (Rat)).